Reading from the N-terminus, the 322-residue chain is Homoserine kinase (322 aa).

Residue 107 to 117 coordinates ATP; sequence PLSSGMGGSAA.

This sequence belongs to the GHMP kinase family. Homoserine kinase subfamily.

The protein localises to the cytoplasm. The enzyme catalyses L-homoserine + ATP = O-phospho-L-homoserine + ADP + H(+). It participates in amino-acid biosynthesis; L-threonine biosynthesis; L-threonine from L-aspartate: step 4/5. Functionally, catalyzes the ATP-dependent phosphorylation of L-homoserine to L-homoserine phosphate. The protein is Homoserine kinase of Xylella fastidiosa (strain M23).